The following is a 149-amino-acid chain: Nucleoside diphosphate kinase 1 (149 aa).

6 residues coordinate ATP: Lys9, Phe57, Arg85, Thr91, Arg102, and Asn112. His115 serves as the catalytic Pros-phosphohistidine intermediate.

This sequence belongs to the NDK family. In terms of assembly, homohexamer. Mg(2+) is required as a cofactor.

The catalysed reaction is a 2'-deoxyribonucleoside 5'-diphosphate + ATP = a 2'-deoxyribonucleoside 5'-triphosphate + ADP. The enzyme catalyses a ribonucleoside 5'-diphosphate + ATP = a ribonucleoside 5'-triphosphate + ADP. In terms of biological role, major role in the synthesis of nucleoside triphosphates other than ATP. The ATP gamma phosphate is transferred to the NDP beta phosphate via a ping-pong mechanism, using a phosphorylated active-site intermediate. This NDK is microtubule-associated. The polypeptide is Nucleoside diphosphate kinase 1 (NDKR) (Oryza sativa subsp. japonica (Rice)).